The chain runs to 531 residues: Probable rhamnogalacturonate lyase A (531 aa).

Residues 1 to 20 (MLSKALFFSSLPLWAKVASA) form the signal peptide. 2 cysteine pairs are disulfide-bonded: Cys-50–Cys-93 and Cys-184–Cys-193. A glycan (N-linked (GlcNAc...) asparagine) is linked at Asn-351.

It belongs to the polysaccharide lyase 4 family.

The protein localises to the secreted. The catalysed reaction is Endotype eliminative cleavage of L-alpha-rhamnopyranosyl-(1-&gt;4)-alpha-D-galactopyranosyluronic acid bonds of rhamnogalacturonan I domains in ramified hairy regions of pectin leaving L-rhamnopyranose at the reducing end and 4-deoxy-4,5-unsaturated D-galactopyranosyluronic acid at the non-reducing end.. Pectinolytic enzymes consist of four classes of enzymes: pectin lyase, polygalacturonase, pectin methylesterase and rhamnogalacturonase. Degrades the rhamnogalacturonan I (RG-I) backbone of pectin. The protein is Probable rhamnogalacturonate lyase A (rglA) of Aspergillus terreus (strain NIH 2624 / FGSC A1156).